The following is a 36-amino-acid chain: Glycine-rich protein GWK (36 aa).

The tract at residues 1 to 36 (YKRGGGGWGGGGGWKGGGGGGGGWKGGGGGGKGGGG) is disordered.

In terms of biological role, possesses antifungal activity against a number of phytopathogenic fungi, including H.sativum and F.culmorum. This Cucumis melo (Muskmelon) protein is Glycine-rich protein GWK.